The primary structure comprises 176 residues: Crossover junction endodeoxyribonuclease RuvC (176 aa).

Residues Asp10, Glu69, and Asp141 contribute to the active site. Residues Asp10, Glu69, and Asp141 each contribute to the Mg(2+) site.

It belongs to the RuvC family. Homodimer which binds Holliday junction (HJ) DNA. The HJ becomes 2-fold symmetrical on binding to RuvC with unstacked arms; it has a different conformation from HJ DNA in complex with RuvA. In the full resolvosome a probable DNA-RuvA(4)-RuvB(12)-RuvC(2) complex forms which resolves the HJ. The cofactor is Mg(2+).

It is found in the cytoplasm. The catalysed reaction is Endonucleolytic cleavage at a junction such as a reciprocal single-stranded crossover between two homologous DNA duplexes (Holliday junction).. Its function is as follows. The RuvA-RuvB-RuvC complex processes Holliday junction (HJ) DNA during genetic recombination and DNA repair. Endonuclease that resolves HJ intermediates. Cleaves cruciform DNA by making single-stranded nicks across the HJ at symmetrical positions within the homologous arms, yielding a 5'-phosphate and a 3'-hydroxyl group; requires a central core of homology in the junction. The consensus cleavage sequence is 5'-(A/T)TT(C/G)-3'. Cleavage occurs on the 3'-side of the TT dinucleotide at the point of strand exchange. HJ branch migration catalyzed by RuvA-RuvB allows RuvC to scan DNA until it finds its consensus sequence, where it cleaves and resolves the cruciform DNA. This chain is Crossover junction endodeoxyribonuclease RuvC, found in Dichelobacter nodosus (strain VCS1703A).